Consider the following 370-residue polypeptide: MPVKIKIEKKEKHTRARLGKLTTPHGEVETPIFMPVGTQATVKTMTPEEVKETGGRLVLSNTYHLYLRPGHDLVKEAGGLHKFMNWDGPILTDSGGFQVFSLGPLRTITEEGVEFRSHIDGSKHFFTPEKVMEIEQALGADIAMAFDECAPYPCEKEYAVAALERTTRWAERCKRVHKREDQALFGIIQGGVFPDLRERSAKELLAMDFPGYGIGGLSVGEPKELMYEVLDQLMPIMPEDKPRYLMGVGSPDCLIEGVVRGVDMFDCVLPTRIARNGTVFTHNGKLTVRNAEYARDFRPMDQQCDCYACRNYSRAYIRHLIKTDEILGIRLTTIHNLHFIQHLMQNIRQAIREDRLLEYREDFLKVFNAG.

Asp-93 (proton acceptor) is an active-site residue. Residues 93-97, Asp-147, Gln-189, and Gly-216 each bind substrate; that span reads DSGGF. Positions 247 to 253 are RNA binding; sequence GVGSPDC. Asp-266 (nucleophile) is an active-site residue. The segment at 271-275 is RNA binding; important for wobble base 34 recognition; that stretch reads TRIAR. Positions 304, 306, 309, and 335 each coordinate Zn(2+).

It belongs to the queuine tRNA-ribosyltransferase family. In terms of assembly, homodimer. Within each dimer, one monomer is responsible for RNA recognition and catalysis, while the other monomer binds to the replacement base PreQ1. Zn(2+) is required as a cofactor.

The catalysed reaction is 7-aminomethyl-7-carbaguanine + guanosine(34) in tRNA = 7-aminomethyl-7-carbaguanosine(34) in tRNA + guanine. It functions in the pathway tRNA modification; tRNA-queuosine biosynthesis. Its function is as follows. Catalyzes the base-exchange of a guanine (G) residue with the queuine precursor 7-aminomethyl-7-deazaguanine (PreQ1) at position 34 (anticodon wobble position) in tRNAs with GU(N) anticodons (tRNA-Asp, -Asn, -His and -Tyr). Catalysis occurs through a double-displacement mechanism. The nucleophile active site attacks the C1' of nucleotide 34 to detach the guanine base from the RNA, forming a covalent enzyme-RNA intermediate. The proton acceptor active site deprotonates the incoming PreQ1, allowing a nucleophilic attack on the C1' of the ribose to form the product. After dissociation, two additional enzymatic reactions on the tRNA convert PreQ1 to queuine (Q), resulting in the hypermodified nucleoside queuosine (7-(((4,5-cis-dihydroxy-2-cyclopenten-1-yl)amino)methyl)-7-deazaguanosine). The sequence is that of Queuine tRNA-ribosyltransferase from Desulforamulus reducens (strain ATCC BAA-1160 / DSM 100696 / MI-1) (Desulfotomaculum reducens).